The following is a 79-amino-acid chain: uncharacterized protein (79 aa).

This is an uncharacterized protein from Methanocaldococcus jannaschii (strain ATCC 43067 / DSM 2661 / JAL-1 / JCM 10045 / NBRC 100440) (Methanococcus jannaschii).